A 1169-amino-acid chain; its full sequence is MSADSSLLMGSTPPSYGTLTTGTSIDPLSSSASSVRLSGYCGSPWRAIGYHAAVWMLAGIPWLLFRWKPLWGVRLRLKPCSLAHAETLVIEIKDKEGSSRQLFTVQVQTEAVVQGSLELPPQAQAEDGRSQAAVGVTPEGTWQDTSELHRQEEAKQVLRYYVLQGQRYVWMETQQAFCQVSLLDHGRTCDDVHCSSSGLSLQDQATRKTIYGPNVISIPVKSYLQLLADEALNPYYGFQAFSIALWLADHYYWYALCIFLISAISICLALYKTRKQSLTLRDMVKLSVRVQVCRPGGEEEWVDSSELVPGDCLVLPQEGGVMPCDAALVAGECVVNESSLTGESTPVLKTALPEGPKPYCPETHRRHTLFCGTLILQARAYVGPRVLAVVTRTGFCTAKGGLVSSILHPRPISFKFYKHSMKFVAALSVLALLGTVYSIIILYRNRVPVREIVIRALDLVTVVVPPALPAAMTVCTLYAQSRLRTQGIFCIHPLRINLGGKLRLVCFDKTGTLTEDGLDVMGVVPLKGQVLLPLVPEPCHLPLGPLLRALATCHALSQLHDTPVGDPMDLKMVESTGWVLEEGPAAGSAPGSQVLVVMRPPPGGPRQQEEPPVPVSVLCRFPFSSALQRMDVVVTWPGATQPEAYVKGSPELVASLCSPETVPSDFSQVLQSYTAAGYRVVALAGKPLPIAPSLAAAQQLTRDTVERELSLLGLLVMRNLLKPQTAPVIQTLRKTGIRTVMVTGDNLQTAVTVARACGMVGAQEHLAVIHATHPEQGQPAALEFLPTESSAVMNGAKATGYPTVPEPQSCHLALSGSTFAVLRKHFPKLLPKVLVQATVFARMAPEQKTELVCELQRLQYCVGMCGDGANDCGALKAADVGISLSQAEASVVSPFTSSMASIECVPTVIREGRCSLDTSFSVFKYMALYSLTQFISVLILYTINTNLGDLQFLAIDLVITTTVAVLMSRTGPALTLVRARPPGALLSVPVLGSLLLQVALVAGIQLGGYFLVIAQPWFVPLNRTVPAPDNLPNYENTVVFSLSGFQYLILAAAVSKGAPFRQPLYTNVPFLVALALLGSVLVGLILVPGLLQGPLGLRNIVDSSFKLLLLGLVAFNFVGAFMLESVLDQCLPACLRWLRPKRASKKQFKRLQQELAEHPWPTLPVGSVR.

Residues 1–44 lie on the Cytoplasmic side of the membrane; that stretch reads MSADSSLLMGSTPPSYGTLTTGTSIDPLSSSASSVRLSGYCGSP. An intramembrane segment occupies 45–65; the sequence is WRAIGYHAAVWMLAGIPWLLF. Residues 66–225 lie on the Cytoplasmic side of the membrane; that stretch reads RWKPLWGVRL…ISIPVKSYLQ (160 aa). A helical transmembrane segment spans residues 226 to 246; it reads LLADEALNPYYGFQAFSIALW. The Lumenal portion of the chain corresponds to 247–250; it reads LADH. Residues 251–271 form a helical membrane-spanning segment; sequence YYWYALCIFLISAISICLALY. Topologically, residues 272–422 are cytoplasmic; the sequence is KTRKQSLTLR…SFKFYKHSMK (151 aa). The chain crosses the membrane as a helical span at residues 423–443; sequence FVAALSVLALLGTVYSIIILY. Residues 444 to 458 lie on the Lumenal side of the membrane; that stretch reads RNRVPVREIVIRALD. A helical transmembrane segment spans residues 459–479; sequence LVTVVVPPALPAAMTVCTLYA. Residues 480–919 lie on the Cytoplasmic side of the membrane; sequence QSRLRTQGIF…REGRCSLDTS (440 aa). Aspartate 508 serves as the catalytic 4-aspartylphosphate intermediate. Positions 867 and 871 each coordinate Mg(2+). The helical transmembrane segment at 920-940 threads the bilayer; the sequence is FSVFKYMALYSLTQFISVLIL. Topologically, residues 941-946 are lumenal; that stretch reads YTINTN. Residues 947–967 form a helical membrane-spanning segment; it reads LGDLQFLAIDLVITTTVAVLM. At 968–993 the chain is on the cytoplasmic side; the sequence is SRTGPALTLVRARPPGALLSVPVLGS. A helical transmembrane segment spans residues 994–1014; sequence LLLQVALVAGIQLGGYFLVIA. Topologically, residues 1015 to 1037 are lumenal; it reads QPWFVPLNRTVPAPDNLPNYENT. Asparagine 1022 carries an N-linked (GlcNAc...) asparagine glycan. Residues 1038 to 1058 traverse the membrane as a helical segment; that stretch reads VVFSLSGFQYLILAAAVSKGA. Topologically, residues 1059–1069 are cytoplasmic; that stretch reads PFRQPLYTNVP. A helical membrane pass occupies residues 1070–1090; the sequence is FLVALALLGSVLVGLILVPGL. At 1091–1106 the chain is on the lumenal side; sequence LQGPLGLRNIVDSSFK. The helical transmembrane segment at 1107-1127 threads the bilayer; that stretch reads LLLLGLVAFNFVGAFMLESVL. At 1128–1169 the chain is on the cytoplasmic side; the sequence is DQCLPACLRWLRPKRASKKQFKRLQQELAEHPWPTLPVGSVR.

The protein belongs to the cation transport ATPase (P-type) (TC 3.A.3) family. Type V subfamily. As to quaternary structure, interacts with MYCBP2; the interaction inhibits the ubiquitination of TSC2 by MYCBP2. Interacts with HDAC6; the interaction results in recruitment of HDAC6 to lysosomes to promote CTTN deacetylation. Post-translationally, autophosphorylated. Accumulates in an inactive autophosphorylated state and autophosphorylation is stimulated by phosphatidic acid and phosphatidylinositol 3,5-bisphosphate but not by Mn(2+) or Zn(2+). The presence of spermine results in a dose-dependent reduction in autophosphorylation.

It localises to the lysosome membrane. The protein resides in the late endosome membrane. It is found in the endosome. Its subcellular location is the multivesicular body membrane. The protein localises to the cytoplasmic vesicle. It localises to the autophagosome membrane. The catalysed reaction is spermidine(out) + ATP + H2O = spermidine(in) + ADP + phosphate + H(+). The enzyme catalyses spermine(out) + ATP + H2O = spermine(in) + ADP + phosphate + H(+). Accumulates in an inactive autophosphorylated state. The presence of spermine results in a dose-dependent reduction in autophosphorylation. Its function is as follows. ATPase which acts as a lysosomal polyamine exporter with high affinity for spermine. Also stimulates cellular uptake of polyamines and protects against polyamine toxicity. Plays a role in intracellular cation homeostasis and the maintenance of neuronal integrity. Contributes to cellular zinc homeostasis. Confers cellular protection against Mn(2+) and Zn(2+) toxicity and mitochondrial stress. Required for proper lysosomal and mitochondrial maintenance. Regulates the autophagy-lysosome pathway through the control of SYT11 expression at both transcriptional and post-translational levels. Facilitates recruitment of deacetylase HDAC6 to lysosomes to deacetylate CTTN, leading to actin polymerization, promotion of autophagosome-lysosome fusion and completion of autophagy. Promotes secretion of exosomes as well as secretion of SCNA via exosomes. Plays a role in lipid homeostasis. The sequence is that of Polyamine-transporting ATPase 13A2 from Mus musculus (Mouse).